The following is a 179-amino-acid chain: Molybdopterin synthase catalytic subunit (179 aa).

Residues methionine 1 to proline 10 are compositionally biased toward polar residues. The interval methionine 1 to histidine 21 is disordered. Substrate is bound by residues histidine 127 to arginine 128, lysine 143, and lysine 150 to glutamate 152.

Belongs to the MoaE family. MOCS2B subfamily. As to quaternary structure, heterotetramer; composed of 2 small (MOCS2A) and 2 large (MOCS2B) subunits.

It is found in the cytoplasm. It carries out the reaction 2 [molybdopterin-synthase sulfur-carrier protein]-C-terminal-Gly-aminoethanethioate + cyclic pyranopterin phosphate + H2O = molybdopterin + 2 [molybdopterin-synthase sulfur-carrier protein]-C-terminal Gly-Gly + 2 H(+). It participates in cofactor biosynthesis; molybdopterin biosynthesis. Catalytic subunit of the molybdopterin synthase complex, a complex that catalyzes the conversion of precursor Z into molybdopterin. Acts by mediating the incorporation of 2 sulfur atoms from thiocarboxylated MOCS2A into precursor Z to generate a dithiolene group. This is Molybdopterin synthase catalytic subunit from Aspergillus oryzae (strain ATCC 42149 / RIB 40) (Yellow koji mold).